Consider the following 358-residue polypeptide: Phospho-N-acetylmuramoyl-pentapeptide-transferase (358 aa).

The next 10 helical transmembrane spans lie at 25-45 (RTIYAVITALVVSFILGPWVI), 73-93 (TMGGILILASIVIPTLLWADL), 97-117 (YVWTTLFVILGYGLIGFTDDY), 134-154 (MFWQMLIAGGAVCFLVLVAGM), 172-192 (YLYIPFGMLVVVGASNAVNLT), 197-217 (GLAIGPVAINAATFLLFAYIA), 233-253 (GAGELAVLCGAMVGAGIGFLW), 261-281 (VFMGDVGSLSLGGGLGILAVI), 286-306 (MLLVIVGGIFVVEALSVIFQV), and 335-355 (KIIVRFWIITIILALVAISTL).

The protein belongs to the glycosyltransferase 4 family. MraY subfamily. Mg(2+) is required as a cofactor.

It localises to the cell inner membrane. It carries out the reaction UDP-N-acetyl-alpha-D-muramoyl-L-alanyl-gamma-D-glutamyl-meso-2,6-diaminopimeloyl-D-alanyl-D-alanine + di-trans,octa-cis-undecaprenyl phosphate = di-trans,octa-cis-undecaprenyl diphospho-N-acetyl-alpha-D-muramoyl-L-alanyl-D-glutamyl-meso-2,6-diaminopimeloyl-D-alanyl-D-alanine + UMP. Its pathway is cell wall biogenesis; peptidoglycan biosynthesis. Catalyzes the initial step of the lipid cycle reactions in the biosynthesis of the cell wall peptidoglycan: transfers peptidoglycan precursor phospho-MurNAc-pentapeptide from UDP-MurNAc-pentapeptide onto the lipid carrier undecaprenyl phosphate, yielding undecaprenyl-pyrophosphoryl-MurNAc-pentapeptide, known as lipid I. The protein is Phospho-N-acetylmuramoyl-pentapeptide-transferase of Geobacter sulfurreducens (strain ATCC 51573 / DSM 12127 / PCA).